The chain runs to 267 residues: Hydroxyethylthiazole kinase (267 aa).

Methionine 46 serves as a coordination point for substrate. 2 residues coordinate ATP: arginine 122 and serine 168. Glycine 195 serves as a coordination point for substrate.

It belongs to the Thz kinase family. Mg(2+) is required as a cofactor.

It carries out the reaction 5-(2-hydroxyethyl)-4-methylthiazole + ATP = 4-methyl-5-(2-phosphooxyethyl)-thiazole + ADP + H(+). It participates in cofactor biosynthesis; thiamine diphosphate biosynthesis; 4-methyl-5-(2-phosphoethyl)-thiazole from 5-(2-hydroxyethyl)-4-methylthiazole: step 1/1. Functionally, catalyzes the phosphorylation of the hydroxyl group of 4-methyl-5-beta-hydroxyethylthiazole (THZ). The polypeptide is Hydroxyethylthiazole kinase (Nitratidesulfovibrio vulgaris (strain DSM 19637 / Miyazaki F) (Desulfovibrio vulgaris)).